We begin with the raw amino-acid sequence, 169 residues long: Peptide methionine sulfoxide reductase MsrA (169 aa).

Residue C10 is part of the active site.

Belongs to the MsrA Met sulfoxide reductase family.

It catalyses the reaction L-methionyl-[protein] + [thioredoxin]-disulfide + H2O = L-methionyl-(S)-S-oxide-[protein] + [thioredoxin]-dithiol. The enzyme catalyses [thioredoxin]-disulfide + L-methionine + H2O = L-methionine (S)-S-oxide + [thioredoxin]-dithiol. Functionally, has an important function as a repair enzyme for proteins that have been inactivated by oxidation. Catalyzes the reversible oxidation-reduction of methionine sulfoxide in proteins to methionine. This Streptococcus agalactiae serotype Ia (strain ATCC 27591 / A909 / CDC SS700) protein is Peptide methionine sulfoxide reductase MsrA.